A 657-amino-acid polypeptide reads, in one-letter code: MAPQKHGSGGNGFYGNSASKAANGGAHASSGVVMTSVKRLKMEQIQADHQLFLEAFEKPTQIYRFLRTRNLITPIFLHRSLTYMSHRNSRTNSKRKSFSLNDLLFKVEKSKVDPESHNLASNLQLTFTGFFHKTEKQLQNSENEENSVSVEVLLVKLCHKKRKDVTCPVKQVPTGKKQVPLNPDISPTKLGAFPTLVVPSHEFEPVNSNTVKSYSLLFRASRPWGREHNGMTTRDTNVIEELSNRKKRYCSHQDDGETTFVAQMTVFDKNRRLQLLDGEYEVSMQEIEESPVGKKRATWETILDEKWVPPFETFSQGPTLQFTLRWTNDTADKATAPVAKPLATRNSESSTVDSSKTSNIKPPQAVAVNDSLGTDLPVRREQTHIEPCQKLHVYYQFLYNNNTRQQTEARDDLHCPWCTLNCRKLYSLLKHLKLSHSRFIFNYVPHPKGARIDVSINECYDGSYVGNPQDILCQPGFAFSRNGPVKRTPVTQILVCRPKRSKPSLSEFLEPEDGEQEQQRTYISGHNRLYFHSDSCTPLRPQEMEVDSEDERDPDWLREKTAMQIEEFTDVNEGEKEIMKLWNLLVMKHGFIADNQMNQACMSFVEQHGTIMVEKNLCRNALLHLINMHDFGLITTATIDKAMTHLRDLTQQSIAQH.

The disordered stretch occupies residues 335–363 (TAPVAKPLATRNSESSTVDSSKTSNIKPP). Positions 347 to 358 (SESSTVDSSKTS) are enriched in low complexity. Residues 413 to 436 (LHCPWCTLNCRKLYSLLKHLKLSH) form a C2H2-type zinc finger. The interval 528 to 604 (RLYFHSDSCT…NQMNQACMSF (77 aa)) is VEFS-box.

It belongs to the VEFS (VRN2-EMF2-FIS2-SU(Z)12) family. In terms of assembly, component of the prc2/eed-ezh2 complex.

It localises to the nucleus. Polycomb group (PcG) protein. Component of the prc2/eed-ezh2 complex, which methylates 'Lys-9' and 'Lys-27' of histone H3, leading to transcriptional repression of the affected target gene. This chain is Polycomb protein suz12-A (suz12a), found in Danio rerio (Zebrafish).